We begin with the raw amino-acid sequence, 123 residues long: Large ribosomal subunit protein bL12 (123 aa).

It belongs to the bacterial ribosomal protein bL12 family. Homodimer. Part of the ribosomal stalk of the 50S ribosomal subunit. Forms a multimeric L10(L12)X complex, where L10 forms an elongated spine to which 2 to 4 L12 dimers bind in a sequential fashion. Binds GTP-bound translation factors.

In terms of biological role, forms part of the ribosomal stalk which helps the ribosome interact with GTP-bound translation factors. Is thus essential for accurate translation. This Chlorobium phaeovibrioides (strain DSM 265 / 1930) (Prosthecochloris vibrioformis (strain DSM 265)) protein is Large ribosomal subunit protein bL12.